The sequence spans 385 residues: Zinc finger protein B385R (385 aa).

C2H2-type zinc fingers lie at residues 166 to 190 (LQCPNCGCIQELMGTIFDETHFYNH) and 168 to 190 (CPNCGCIQELMGTIFDETHFYNH).

The protein belongs to the asfivirus B385R family.

The sequence is that of Zinc finger protein B385R from African swine fever virus (isolate Tick/South Africa/Pretoriuskop Pr4/1996) (ASFV).